An 83-amino-acid polypeptide reads, in one-letter code: Cytochrome b559 subunit alpha (83 aa).

The helical transmembrane segment at 21-35 (VIHSITIPSLFIAGW) threads the bilayer. His-23 contacts heme.

This sequence belongs to the PsbE/PsbF family. In terms of assembly, heterodimer of an alpha subunit and a beta subunit. PSII is composed of 1 copy each of membrane proteins PsbA, PsbB, PsbC, PsbD, PsbE, PsbF, PsbH, PsbI, PsbJ, PsbK, PsbL, PsbM, PsbT, PsbX, PsbY, PsbZ, Psb30/Ycf12, at least 3 peripheral proteins of the oxygen-evolving complex and a large number of cofactors. It forms dimeric complexes. Heme b is required as a cofactor.

It is found in the plastid. The protein localises to the chloroplast thylakoid membrane. Its function is as follows. This b-type cytochrome is tightly associated with the reaction center of photosystem II (PSII). PSII is a light-driven water:plastoquinone oxidoreductase that uses light energy to abstract electrons from H(2)O, generating O(2) and a proton gradient subsequently used for ATP formation. It consists of a core antenna complex that captures photons, and an electron transfer chain that converts photonic excitation into a charge separation. The polypeptide is Cytochrome b559 subunit alpha (Marchantia polymorpha (Common liverwort)).